A 30-amino-acid chain; its full sequence is Cytochrome b6-f complex subunit 8 (30 aa).

A helical membrane pass occupies residues 4 to 24; sequence IISLGWGSLLAIFSFSIALVV.

Belongs to the PetN family. In terms of assembly, the 4 large subunits of the cytochrome b6-f complex are cytochrome b6, subunit IV (17 kDa polypeptide, PetD), cytochrome f and the Rieske protein, while the 4 small subunits are PetG, PetL, PetM and PetN. The complex functions as a dimer.

It is found in the plastid. Its subcellular location is the chloroplast thylakoid membrane. Its function is as follows. Component of the cytochrome b6-f complex, which mediates electron transfer between photosystem II (PSII) and photosystem I (PSI), cyclic electron flow around PSI, and state transitions. The sequence is that of Cytochrome b6-f complex subunit 8 from Gracilaria tenuistipitata var. liui (Red alga).